We begin with the raw amino-acid sequence, 307 residues long: 2-dehydropantoate 2-reductase (307 aa).

NADP(+) is bound by residues 7–12 (GSGAMG), Asn-102, and Ala-128. Asn-102 provides a ligand contact to substrate. The active-site Proton donor is Lys-184. Positions 188, 192, and 255 each coordinate substrate. Glu-268 is a binding site for NADP(+).

The protein belongs to the ketopantoate reductase family.

The protein localises to the cytoplasm. The enzyme catalyses (R)-pantoate + NADP(+) = 2-dehydropantoate + NADPH + H(+). Its pathway is cofactor biosynthesis; (R)-pantothenate biosynthesis; (R)-pantoate from 3-methyl-2-oxobutanoate: step 2/2. Functionally, catalyzes the NADPH-dependent reduction of ketopantoate into pantoic acid. The protein is 2-dehydropantoate 2-reductase (apbA) of Streptococcus pyogenes serotype M6 (strain ATCC BAA-946 / MGAS10394).